Here is a 357-residue protein sequence, read N- to C-terminus: Elongation factor Ts (357 aa).

Residues 82–85 (TDFV) are involved in Mg(2+) ion dislocation from EF-Tu.

It belongs to the EF-Ts family.

It localises to the cytoplasm. In terms of biological role, associates with the EF-Tu.GDP complex and induces the exchange of GDP to GTP. It remains bound to the aminoacyl-tRNA.EF-Tu.GTP complex up to the GTP hydrolysis stage on the ribosome. The chain is Elongation factor Ts from Campylobacter jejuni (strain RM1221).